Consider the following 440-residue polypeptide: MSLDGVWAPQTANIGDGPAKKASDQASMQTQVLQTASLKDGPAKRAVWVRRDNAETEDPVKSTMSKDRPRLEVTKAVVVDLGTGFCKCGFAGLPKPTHKISTTVGKPYMETAKTGDNRKETFVGHELFNPDIHLKLVNPLRHGIIVDWDTVQDIWEYLFRQEMKIAPEEHAVLVSDPPLSPHTNREKYAEMLFETFNTPAMHIAYQSRLSMYSYGRTSGLVVEVGHGVSYVVPIYEGYPLPSITGRLDYAGSDLTTYLMNLMNNSGKHFSEDHLGIVEDIKTRCCFVALDPIEEKKIPAPEHEIHYTLPDGKEIRLGQERFLCSEMFFKPSLIKSMQLGLHTQTVSCLNKCDIALKRDLMGNILLCGGSTMLRGFPNRLQKELSSMCPNDTPQVNVLPERDTAVWTGGSILASLQGFQPLWVHRLEYEEHGPFFLYRRCF.

Residues 1-29 (MSLDGVWAPQTANIGDGPAKKASDQASMQ) form a disordered region. Residues 36-56 (ASLKDGPAKRAVWVRRDNAET) are required for interaction with TES.

Belongs to the actin family. Interacts (via N-terminus) with TES (via LIM domain 2). Heterodimer with TES; the heterodimer interacts with ENAH to form a heterotrimer. Interacts with ACTL9. Interacts with CYLC1; the interaction may be relevant for proper acrosome attachment to the nuclear envelope. Detected in testis. Detected at the acrosome of round spermatids (at protein level). Detected in adult and embryonic testis. Detected in developing male germ cells.

The protein resides in the cytoplasm. The protein localises to the cytoskeleton. It is found in the golgi apparatus. Its subcellular location is the nucleus. It localises to the cytoplasmic vesicle. The protein resides in the secretory vesicle. The protein localises to the acrosome. Functionally, essential for normal spermatogenesis and male fertility. Required for normal sperm head morphology, acroplaxome formation, acrosome attachment, and acrosome granule stability. May anchor and stabilize acrosomal adherence to the acroplaxome at least in part by facilitating the presence of F-actin in the subacrosomal space. May play an important role in formation and fusion of Golgi-derived vesicles during acrosome biogenesis. The protein is Actin-like protein 7A (Actl7a) of Mus musculus (Mouse).